We begin with the raw amino-acid sequence, 503 residues long: WAS/WASL-interacting protein family member 1 (503 aa).

The segment covering 1–14 has biased composition (pro residues); sequence MPVPPPPAPPPPPT. A disordered region spans residues 1–503; the sequence is MPVPPPPAPP…GAPPLPPIPR (503 aa). The span at 21-31 shows a compositional bias: polar residues; the sequence is EKPTLNKTEQA. Positions 32–49 constitute a WH2 domain; sequence GRNALLSDISKGKKLKKT. Asymmetric dimethylarginine is present on Arg-33. Residues 45-48 form a binds actin region; it reads KLKK. Residues 65–104 show a composition bias toward gly residues; it reads AGAGGGGGGFGGGGGFGGGGGGGGGGSFGGGGPPGLGGLF. The segment covering 121–137 has biased composition (low complexity); sequence SGGSRPPLLPPGGRSTS. Omega-N-methylarginine is present on residues Arg-125 and Arg-134. 4 stretches are compositionally biased toward pro residues: residues 141–154, 161–174, 182–191, and 204–223; these read FSPP…PVPS, PPEP…PPRP, SIPPPVPSTP, and PPVP…PPFP. Ser-142 bears the Phosphoserine mark. Phosphoserine is present on Ser-234. The span at 238–247 shows a compositional bias: low complexity; sequence SPLSSSSPFS. 2 stretches are compositionally biased toward pro residues: residues 282–298 and 306–323; these read VPPP…PSTP and APPP…PLPP. The residue at position 340 (Ser-340) is a Phosphoserine. Thr-345 is modified (phosphothreonine). Over residues 346–371 the composition is skewed to pro residues; that stretch reads PPLPSPGRSGPLPPPPSERPPPPVRD. The residue at position 350 (Ser-350) is a Phosphoserine. XRSGPXPPXP motif repeat units follow at residues 352–361, 374–383, and 410–419; these read GRSGPLPPPP and PRSGPRPPLP. Pro residues predominate over residues 413-434; that stretch reads GPRPPLPPDRPSAGAPPPPPPS. Basic and acidic residues predominate over residues 480–494; the sequence is ARNESRSGSNRRERG.

It belongs to the verprolin family. In terms of assembly, binds to WAS, profilin and actin. Binds to WASL. Interacts with DBNL. Interacts with FNBP1L (via the SH3 domain). Highly expressed in peripheral blood mononuclear cells, spleen, placenta, small intestine, colon and thymus. Lower expression in ovary, heart, brain, lung, liver, skeletal muscle, kidney, pancreas, prostate and testis.

It localises to the cytoplasmic vesicle. The protein resides in the cytoplasm. Its subcellular location is the cytoskeleton. It is found in the cell projection. The protein localises to the ruffle. In terms of biological role, plays a role in the reorganization of the actin cytoskeleton. Contributes with NCK1 and GRB2 in the recruitment and activation of WASL. May participate in regulating the subcellular localization of WASL, resulting in the disassembly of stress fibers in favor of filopodia formation. Plays a role in the formation of cell ruffles. Plays an important role in the intracellular motility of vaccinia virus by functioning as an adapter for recruiting WASL to vaccinia virus. This Homo sapiens (Human) protein is WAS/WASL-interacting protein family member 1 (WIPF1).